We begin with the raw amino-acid sequence, 643 residues long: Sodium-dependent nutrient amino acid transporter 1 (643 aa).

A disordered region spans residues 1–38; the sequence is MELKGVQPSNGSPNGNGNGATNAASTEKTDAEKPTAER. Residues 1–40 lie on the Cytoplasmic side of the membrane; that stretch reads MELKGVQPSNGSPNGNGNGATNAASTEKTDAEKPTAERTN. The span at 8–26 shows a compositional bias: low complexity; the sequence is PSNGSPNGNGNGATNAAST. The segment covering 27-36 has biased composition (basic and acidic residues); that stretch reads EKTDAEKPTA. Transmembrane regions (helical) follow at residues 41–61, 74–94, and 111–131; these read WGNGLEFLMSCISVSVGLGNV, GAFLIPYIIVLFLIGKPMYYL, and SVVPGFVGVGYGQAFGTICII. N-linked (GlcNAc...) asparagine glycosylation is found at asparagine 185, asparagine 190, and asparagine 200. 9 consecutive transmembrane segments (helical) span residues 231-251, 260-280, 309-329, 343-363, 403-423, 449-469, 476-496, 518-538, and 554-574; these read PDWKLTLALFVAWVVIFLVIM, AAYFLALFPYVVLFVLLIRAV, AVVQCFFSLAVGSGPIIMFAS, IVTTLDTLTSLLGGITIFAIL, LFSVLFFFMLFVLGIGSIVAL, VCGFLMGLVYVTPGGQWILTL, TYVVFILAIFELAGIVWVYGL, CWSFFTPVMMIIIFIYSMATI, and VAGWLLFAIGAAQFPLWGLWY.

It belongs to the sodium:neurotransmitter symporter (SNF) (TC 2.A.22) family.

It localises to the membrane. Functionally, unusual broad substrate spectrum amino acid:sodium cotransporter that promotes absorption of the D isomers of essential amino acids. Neutral amino acids are the preferred substrates, especially methionine and phenylalanine. The sequence is that of Sodium-dependent nutrient amino acid transporter 1 from Drosophila simulans (Fruit fly).